A 100-amino-acid polypeptide reads, in one-letter code: NADH-quinone oxidoreductase subunit K (100 aa).

3 helical membrane-spanning segments follow: residues 4–24 (MQHG…GLLI), 28–48 (LIFM…AWVV), and 60–80 (IFYL…LALL).

The protein belongs to the complex I subunit 4L family. NDH-1 is composed of 13 different subunits. Subunits NuoA, H, J, K, L, M, N constitute the membrane sector of the complex.

The protein resides in the cell membrane. It catalyses the reaction a quinone + NADH + 5 H(+)(in) = a quinol + NAD(+) + 4 H(+)(out). In terms of biological role, NDH-1 shuttles electrons from NADH, via FMN and iron-sulfur (Fe-S) centers, to quinones in the respiratory chain. The immediate electron acceptor for the enzyme in this species is believed to be ubiquinone. Couples the redox reaction to proton translocation (for every two electrons transferred, four hydrogen ions are translocated across the cytoplasmic membrane), and thus conserves the redox energy in a proton gradient. The sequence is that of NADH-quinone oxidoreductase subunit K from Hamiltonella defensa subsp. Acyrthosiphon pisum (strain 5AT).